The primary structure comprises 391 residues: MVTQNKKILIITGSFGNGHMQVTQSIVNQLNDMNLDHLSVIEHDLFMEAHPILTSICKKWYINSFKYFRNMYKGFYYSRPDKLNKCFYKYYGLNKLINLLIKEKPDLILLTFPTPVMSVLTEQFNINIPVATVMTDYRLHKNWITPYSTRYYVATKETKQDFIDVGIDPSTVKVTGIPIDNKFETPINQKQWLIDNNLDPDKQTILMSAGAFGVSKGFDTMITDILAKSANAQVVMICGKSKELKRSLTAKFKSNENVLILGYTKHMNEWMASSQLMITKPGGITITEGFARCIPMIFLNPAPGQELENALYFEEKGFGKIADTPEEAIKIVASLTNGNEQLTNMISTMEQDKIKYATQTICQDLLDLIGHSSQPQEIYGKVPLYARFFVK.

The protein belongs to the glycosyltransferase 28 family. UgtP subfamily.

The protein resides in the cell membrane. The catalysed reaction is a 1,2-diacyl-3-O-(beta-D-glucopyranosyl)-sn-glycerol + UDP-alpha-D-glucose = a 1,2-diacyl-3-O-(beta-D-Glc-(1-&gt;6)-beta-D-Glc)-sn-glycerol + UDP + H(+). The enzyme catalyses a 1,2-diacyl-sn-glycerol + UDP-alpha-D-glucose = a 1,2-diacyl-3-O-(beta-D-glucopyranosyl)-sn-glycerol + UDP + H(+). The protein operates within glycolipid metabolism; diglucosyl-diacylglycerol biosynthesis. Functionally, processive glucosyltransferase involved in the biosynthesis of both the bilayer- and non-bilayer-forming membrane glucolipids. Is able to successively transfer two glucosyl residues to diacylglycerol (DAG), thereby catalyzing the formation of beta-monoglucosyl-DAG (3-O-(beta-D-glucopyranosyl)-1,2-diacyl-sn-glycerol) and beta-diglucosyl-DAG (3-O-(beta-D-glucopyranosyl-beta-(1-&gt;6)-D-glucopyranosyl)-1,2-diacyl-sn-glycerol). Beta-diglucosyl-DAG is the predominant glycolipid found in Bacillales and is also used as a membrane anchor for lipoteichoic acid (LTA). The chain is Processive diacylglycerol beta-glucosyltransferase from Staphylococcus aureus (strain MRSA252).